We begin with the raw amino-acid sequence, 705 residues long: MARTTPIERYRNFGIMAHIDAGKTTTSERILFYTGVSHKIGEVHDGAAVMDWMEQEQERGITITSAATTAFWSGMDKSMPQHRFNIIDTPGHVDFTIEVERSLRVLDGAVFVLCAVGGVQPQSETVWRQANKYSVPRMAFVNKMDRTGANFDKVVEQLKARLGAYAVPMQVPIGAEDGFEGVVDLLKMKAIHWDTASQGTTFEYRDIPADLVDVATEARSFMVEAAAEASEDLMDKYLNEGDLSEQEILSGLRERTLKVEIVPVFCGSAFKNKGVQAMLDGVVHLLPSPADRPPVQGIDEDEKEDTRAATDTAPFSALAFKIMTDPFVGSLTFFRVYSGTLNSGDQVYNPVKSKKERVGRILQMHSNNREEIKEVRAGDIAAAVGLKDVTTGDTLCAQDKIITLERMVFPEPVISMAVEPKTKSDQEKMGMALGRLAQEDPSFRVKTDEESGQTIISGMGELHLDIIVDRMRREFNVEANVGKPQVAYRETIRKSDVKSDYKHAKQSGGKGQYGHVVIELSPMTEEERKSDNVKDDFLFVNDITGGIIPKEFIPSVEKGLRETITSGPIAGFPVVGVKVKLVFGSYHDVDSSEMAFKLAASMAFKQGFAKASPVLLEPIMKVEIVSPEDYLGDVMGDVSRRRGVLQGQDDSPSGKIINAMIPLGEMFGYATSLRSMSQGRATFSMEFDHYEEAPANIADAVTKKG.

One can recognise a tr-type G domain in the interval 8–290 (ERYRNFGIMA…GVVHLLPSPA (283 aa)). GTP-binding positions include 17–24 (AHIDAGKT), 88–92 (DTPGH), and 142–145 (NKMD). Residues 290–309 (ADRPPVQGIDEDEKEDTRAA) form a disordered region.

This sequence belongs to the TRAFAC class translation factor GTPase superfamily. Classic translation factor GTPase family. EF-G/EF-2 subfamily.

The protein localises to the cytoplasm. Its function is as follows. Catalyzes the GTP-dependent ribosomal translocation step during translation elongation. During this step, the ribosome changes from the pre-translocational (PRE) to the post-translocational (POST) state as the newly formed A-site-bound peptidyl-tRNA and P-site-bound deacylated tRNA move to the P and E sites, respectively. Catalyzes the coordinated movement of the two tRNA molecules, the mRNA and conformational changes in the ribosome. This is Elongation factor G from Xanthomonas axonopodis pv. citri (strain 306).